Consider the following 366-residue polypeptide: D-alanine--D-alanine ligase (366 aa).

Positions 140–346 (KALFAQSDLP…YGELLSRLVD (207 aa)) constitute an ATP-grasp domain. ATP is bound at residue 173–228 (EDRLGYPCFVKPANMGSSVGISKATNRAELVAAFDDAVRYDRKLIVEKGINVREIE). Mg(2+) contacts are provided by D299, E313, and N315.

This sequence belongs to the D-alanine--D-alanine ligase family. Mg(2+) is required as a cofactor. The cofactor is Mn(2+).

The protein resides in the cytoplasm. It carries out the reaction 2 D-alanine + ATP = D-alanyl-D-alanine + ADP + phosphate + H(+). Its pathway is cell wall biogenesis; peptidoglycan biosynthesis. Its function is as follows. Cell wall formation. In Heliobacterium modesticaldum (strain ATCC 51547 / Ice1), this protein is D-alanine--D-alanine ligase.